Consider the following 207-residue polypeptide: UPF0126 inner membrane protein YadS (207 aa).

The chain crosses the membrane as a helical span at residues 1 to 21; sequence MLVYWLDIVGTAVFAISGVLL. The Cytoplasmic segment spans residues 22 to 29; that stretch reads AGKLRMDP. Residues 30 to 50 form a helical membrane-spanning segment; that stretch reads FGVLVLGVVTAVGGGTIRDMA. Topologically, residues 51–58 are periplasmic; sequence LDHGPVFW. The chain crosses the membrane as a helical span at residues 59 to 79; sequence VKDPTDLVVAMVTSMLTIVLV. Topologically, residues 80 to 85 are cytoplasmic; that stretch reads RQPRRL. Residues 86-106 traverse the membrane as a helical segment; that stretch reads PKWMLPVLDAVGLAVFVGIGV. At 107–112 the chain is on the periplasmic side; the sequence is NKAFNA. Residues 113–133 form a helical membrane-spanning segment; it reads EAGPLIAVCMGVITGVGGGII. Residues 134–148 lie on the Cytoplasmic side of the membrane; that stretch reads RDVLAREIPMILRTE. A helical transmembrane segment spans residues 149-169; that stretch reads IYATACIIGGIVHATAYYTFS. A topological domain (periplasmic) is located at residue valine 170. The chain crosses the membrane as a helical span at residues 171–191; the sequence is PLETASMMGMVVTLLIRLAAI. Topologically, residues 192 to 207 are cytoplasmic; sequence RWHLKLPTFALDENGR.

It belongs to the UPF0126 family.

It is found in the cell inner membrane. The chain is UPF0126 inner membrane protein YadS (yadS) from Escherichia coli O6:H1 (strain CFT073 / ATCC 700928 / UPEC).